The chain runs to 114 residues: Large ribosomal subunit protein uL22 (114 aa).

It belongs to the universal ribosomal protein uL22 family. Part of the 50S ribosomal subunit.

This protein binds specifically to 23S rRNA; its binding is stimulated by other ribosomal proteins, e.g. L4, L17, and L20. It is important during the early stages of 50S assembly. It makes multiple contacts with different domains of the 23S rRNA in the assembled 50S subunit and ribosome. Functionally, the globular domain of the protein is located near the polypeptide exit tunnel on the outside of the subunit, while an extended beta-hairpin is found that lines the wall of the exit tunnel in the center of the 70S ribosome. This chain is Large ribosomal subunit protein uL22, found in Ehrlichia canis (strain Jake).